The chain runs to 831 residues: Periplasmic nitrate reductase (831 aa).

The segment at residues 1-29 is a signal peptide (tat-type signal); sequence MKFTRREFMKAQAAASAAAVAGIALPATA. Residues 41 to 97 enclose the 4Fe-4S Mo/W bis-MGD-type domain; it reads IKWEKAPCRFCGTGCSVLVGTQHGRVVATQGDPESPVNKGLNCVKGYFLSKIMYGKD. Residues Cys-48, Cys-51, Cys-55, and Cys-83 each contribute to the [4Fe-4S] cluster site. Mo-bis(molybdopterin guanine dinucleotide) is bound by residues Lys-85, Gln-152, Asn-177, Cys-181, 214-221, 245-249, 264-266, Met-374, Gln-378, Asn-484, 510-511, Lys-533, Asp-560, and 720-729; these read WGSNMAEM, STYTH, QSD, SD, and TGRVLEHWHS. Trp-796 contributes to the substrate binding site. Mo-bis(molybdopterin guanine dinucleotide) contacts are provided by Asn-804 and Lys-821.

It belongs to the prokaryotic molybdopterin-containing oxidoreductase family. NasA/NapA/NarB subfamily. As to quaternary structure, component of the periplasmic nitrate reductase NapAB complex composed of NapA and NapB. It depends on [4Fe-4S] cluster as a cofactor. Mo-bis(molybdopterin guanine dinucleotide) serves as cofactor. Predicted to be exported by the Tat system. The position of the signal peptide cleavage has not been experimentally proven.

It localises to the periplasm. It carries out the reaction 2 Fe(II)-[cytochrome] + nitrate + 2 H(+) = 2 Fe(III)-[cytochrome] + nitrite + H2O. Its function is as follows. Catalytic subunit of the periplasmic nitrate reductase complex NapAB. Receives electrons from NapB and catalyzes the reduction of nitrate to nitrite. This chain is Periplasmic nitrate reductase, found in Psychromonas ingrahamii (strain DSM 17664 / CCUG 51855 / 37).